A 905-amino-acid polypeptide reads, in one-letter code: MISKIITSIFGSSNDRTLKRLRKRVAQINKLEPAFEKLTDEELQAKTAEFKQRLADGASLDSLLHEAFATVREASRRVMGMRHFDVQLIGGMVLTNRNIAEMRTGEGKTLTATLPCYLNALTGKGVHVVTVNDYLARRDAETNRPLFEFLGLSVAVNVPGLPNEVKREAYKADITYSTNSELGFDYLRDNLAHAKEDRFQRELHYALVDEVDSILIDEARTPLIISGPAEDATQIYQAIDTIIPHLVQQDKEDTEEYTGEGDFTLDLKNKQAHLTERGMVKVEGILTEMGLMQEGETLYHPARIALLHHVYAALRAHKLFELNVDYIVKDGEVVIIDEHTGRTMAGRRWSDGLHQAIEAKEKVNIQGENQTVASITYQNYFRLYEKLAGMTGTADTEAFEFQQIYGLDTIVIPTNKPVIRDDRTDLMFKSEPEKFAAIIKDIQECMARQQPVLVGTASVEKSELLSAELTKAGIAHNVLNAKFHAQEAEIVAEAGAPGAVTIATNMAGRGTDIVLGGNWKAEIAKLENPTEEQIEAIKAAWKERYDIVMKAGGLHIIGTERHESRRIDNQLRGRSGRQGDPGSSRFYLSLDDALMRIYLNEGKLNMMRKAFSEEGEAMESKLLTKVIASAQAKVEAHNFDGRKNLLQYDDVANEQRKAIYEQRNYLLETEDISAMIETIRGDVFNRVIDQFIPPQSIEEMWDVAGLEEALKRQFGMELPIQHWLEQENDLHEETLRERIIDIATQEYHAKEEKVGSEVMRNFEKGVMLQNLDELWKEHLSAMDYLRKGIHLRGYAQKDPKQEYKKESFEMFTNMLDLLKSNVISVLSRIQVRSQEEIEEAQRQQEAMAQAESENYRTADHQAEAQQSESLTEEQLANLDIGRNDPCPCGSGKKYKHCHGSKARYA.

ATP is bound by residues Gln-87, 105–109 (GEGKT), and Asp-512. Residues 840 to 905 (AQRQQEAMAQ…HCHGSKARYA (66 aa)) form a disordered region. Low complexity predominate over residues 843-852 (QQEAMAQAES). Residues 853 to 862 (ENYRTADHQA) show a composition bias toward basic and acidic residues. Residues 863 to 874 (EAQQSESLTEEQ) are compositionally biased toward polar residues. 4 residues coordinate Zn(2+): Cys-886, Cys-888, Cys-897, and His-898. Positions 892–905 (KKYKHCHGSKARYA) are enriched in basic residues.

The protein belongs to the SecA family. As to quaternary structure, monomer and homodimer. Part of the essential Sec protein translocation apparatus which comprises SecA, SecYEG and auxiliary proteins SecDF-YajC and YidC. Zn(2+) is required as a cofactor.

The protein resides in the cell inner membrane. The protein localises to the cytoplasm. It carries out the reaction ATP + H2O + cellular proteinSide 1 = ADP + phosphate + cellular proteinSide 2.. In terms of biological role, part of the Sec protein translocase complex. Interacts with the SecYEG preprotein conducting channel. Has a central role in coupling the hydrolysis of ATP to the transfer of proteins into and across the cell membrane, serving both as a receptor for the preprotein-SecB complex and as an ATP-driven molecular motor driving the stepwise translocation of polypeptide chains across the membrane. The sequence is that of Protein translocase subunit SecA from Actinobacillus pleuropneumoniae serotype 3 (strain JL03).